Reading from the N-terminus, the 893-residue chain is UPF0182 protein CLD_0809 (893 aa).

7 helical membrane passes run 9–29 (IPLF…NFII), 49–69 (AIII…WMYY), 94–114 (LFFI…SSSY), 154–174 (VIIS…FILE), 202–222 (LAIV…IKIW), 246–266 (FYKI…LSIV), and 273–293 (VSIC…ASFL).

The protein belongs to the UPF0182 family.

It localises to the cell membrane. The polypeptide is UPF0182 protein CLD_0809 (Clostridium botulinum (strain Okra / Type B1)).